A 447-amino-acid chain; its full sequence is RNA-binding protein 208 (447 aa).

RRM domains are found at residues 73–147 (RSVY…WAYA) and 158–236 (FHIF…WATK). Residues 254–269 (TNGSSSNPGMEASQDT) are compositionally biased toward polar residues. 2 disordered regions span residues 254–279 (TNGSSSNPGMEASQDTGSKENPENNP) and 353–372 (WGNKPTPPGTSSKPLPPPLP). Residues 282–356 (TTVYVGNLGH…KPIKCSWGNK (75 aa)) enclose the RRM 3 domain.

In terms of assembly, interacts with RBP-P.

Functionally, RNA-binding protein. The chain is RNA-binding protein 208 from Oryza sativa subsp. japonica (Rice).